A 272-amino-acid polypeptide reads, in one-letter code: Ethanolamine ammonia-lyase small subunit (272 aa).

Residues Val161, Glu182, and Cys211 each contribute to the adenosylcob(III)alamin site.

Belongs to the EutC family. In terms of assembly, the basic unit is a heterodimer which dimerizes to form tetramers. The heterotetramers trimerize; 6 large subunits form a core ring with 6 small subunits projecting outwards. Adenosylcob(III)alamin is required as a cofactor.

Its subcellular location is the bacterial microcompartment. The catalysed reaction is ethanolamine = acetaldehyde + NH4(+). Its pathway is amine and polyamine degradation; ethanolamine degradation. Its function is as follows. Catalyzes the deamination of various vicinal amino-alcohols to oxo compounds. Allows this organism to utilize ethanolamine as the sole source of nitrogen and carbon in the presence of external vitamin B12. This chain is Ethanolamine ammonia-lyase small subunit, found in Pseudomonas putida (strain W619).